The sequence spans 362 residues: Phosphoserine aminotransferase (362 aa).

Arg-42 provides a ligand contact to L-glutamate. Residues 76-77 (AR), Trp-102, Thr-152, Asp-172, and Gln-195 each bind pyridoxal 5'-phosphate. N6-(pyridoxal phosphate)lysine is present on Lys-196. Residue 237 to 238 (NT) coordinates pyridoxal 5'-phosphate.

Belongs to the class-V pyridoxal-phosphate-dependent aminotransferase family. SerC subfamily. In terms of assembly, homodimer. Pyridoxal 5'-phosphate serves as cofactor.

Its subcellular location is the cytoplasm. The catalysed reaction is O-phospho-L-serine + 2-oxoglutarate = 3-phosphooxypyruvate + L-glutamate. It catalyses the reaction 4-(phosphooxy)-L-threonine + 2-oxoglutarate = (R)-3-hydroxy-2-oxo-4-phosphooxybutanoate + L-glutamate. It functions in the pathway amino-acid biosynthesis; L-serine biosynthesis; L-serine from 3-phospho-D-glycerate: step 2/3. Its pathway is cofactor biosynthesis; pyridoxine 5'-phosphate biosynthesis; pyridoxine 5'-phosphate from D-erythrose 4-phosphate: step 3/5. Catalyzes the reversible conversion of 3-phosphohydroxypyruvate to phosphoserine and of 3-hydroxy-2-oxo-4-phosphonooxybutanoate to phosphohydroxythreonine. This chain is Phosphoserine aminotransferase, found in Haemophilus influenzae (strain ATCC 51907 / DSM 11121 / KW20 / Rd).